Reading from the N-terminus, the 838-residue chain is DNA gyrase subunit A (838 aa).

The region spanning 41–510 (LPEVRDGLKP…ADGDVSDEDL (470 aa)) is the Topo IIA-type catalytic domain. Residue tyrosine 129 is the O-(5'-phospho-DNA)-tyrosine intermediate of the active site. The GyrA-box motif lies at 537–543 (QKRGGKG).

This sequence belongs to the type II topoisomerase GyrA/ParC subunit family. In terms of assembly, heterotetramer, composed of two GyrA and two GyrB chains. In the heterotetramer, GyrA contains the active site tyrosine that forms a transient covalent intermediate with DNA, while GyrB binds cofactors and catalyzes ATP hydrolysis.

The protein localises to the cytoplasm. It carries out the reaction ATP-dependent breakage, passage and rejoining of double-stranded DNA.. A type II topoisomerase that negatively supercoils closed circular double-stranded (ds) DNA in an ATP-dependent manner to modulate DNA topology and maintain chromosomes in an underwound state. Negative supercoiling favors strand separation, and DNA replication, transcription, recombination and repair, all of which involve strand separation. Also able to catalyze the interconversion of other topological isomers of dsDNA rings, including catenanes and knotted rings. Type II topoisomerases break and join 2 DNA strands simultaneously in an ATP-dependent manner. This is DNA gyrase subunit A from Mycobacterium tuberculosis (strain CDC 1551 / Oshkosh).